Here is a 664-residue protein sequence, read N- to C-terminus: Glycine--tRNA ligase beta subunit (664 aa).

The protein belongs to the class-II aminoacyl-tRNA synthetase family. Tetramer of two alpha and two beta subunits.

It is found in the cytoplasm. It catalyses the reaction tRNA(Gly) + glycine + ATP = glycyl-tRNA(Gly) + AMP + diphosphate. This Rickettsia peacockii (strain Rustic) protein is Glycine--tRNA ligase beta subunit.